The primary structure comprises 436 residues: UPF0597 protein YhaM (436 aa).

The protein belongs to the UPF0597 family.

This is UPF0597 protein YhaM from Salmonella paratyphi C (strain RKS4594).